The following is a 218-amino-acid chain: Methylthioribulose-1-phosphate dehydratase (218 aa).

Zn(2+)-binding residues include His-107 and His-109.

This sequence belongs to the aldolase class II family. MtnB subfamily. The cofactor is Zn(2+).

It carries out the reaction 5-(methylsulfanyl)-D-ribulose 1-phosphate = 5-methylsulfanyl-2,3-dioxopentyl phosphate + H2O. Its pathway is amino-acid biosynthesis; L-methionine biosynthesis via salvage pathway; L-methionine from S-methyl-5-thio-alpha-D-ribose 1-phosphate: step 2/6. In terms of biological role, catalyzes the dehydration of methylthioribulose-1-phosphate (MTRu-1-P) into 2,3-diketo-5-methylthiopentyl-1-phosphate (DK-MTP-1-P). The polypeptide is Methylthioribulose-1-phosphate dehydratase (Xylella fastidiosa (strain 9a5c)).